The primary structure comprises 79 residues: Sulfur carrier protein TusA (79 aa).

The active-site Cysteine persulfide intermediate is cysteine 17.

It belongs to the sulfur carrier protein TusA family.

The protein resides in the cytoplasm. In terms of biological role, sulfur carrier protein which probably makes part of a sulfur-relay system. In Haemophilus influenzae (strain 86-028NP), this protein is Sulfur carrier protein TusA.